The chain runs to 248 residues: Triosephosphate isomerase (248 aa).

Residues Asn-10 and Lys-12 each coordinate substrate. The active-site Electrophile is His-95. Glu-165 (proton acceptor) is an active-site residue.

The protein belongs to the triosephosphate isomerase family. As to quaternary structure, homodimer.

It carries out the reaction D-glyceraldehyde 3-phosphate = dihydroxyacetone phosphate. It functions in the pathway carbohydrate biosynthesis; gluconeogenesis. It participates in carbohydrate degradation; glycolysis; D-glyceraldehyde 3-phosphate from glycerone phosphate: step 1/1. The protein is Triosephosphate isomerase (TPI1) of Eremothecium gossypii (strain ATCC 10895 / CBS 109.51 / FGSC 9923 / NRRL Y-1056) (Yeast).